A 443-amino-acid chain; its full sequence is BBSome complex member BBS5 homolog (443 aa).

This sequence belongs to the BBS5 family.

Its subcellular location is the cytoplasm. It is found in the cytoskeleton. The protein resides in the flagellum axoneme. In Giardia intestinalis (strain ATCC 50803 / WB clone C6) (Giardia lamblia), this protein is BBSome complex member BBS5 homolog.